Consider the following 170-residue polypeptide: Photosystem I assembly protein Ycf3 (170 aa).

TPR repeat units lie at residues 35-68 (AFTY…EIDP), 72-105 (SYIL…NPFL), and 120-153 (GEQA…TPGN).

This sequence belongs to the Ycf3 family.

The protein resides in the plastid. It is found in the chloroplast thylakoid membrane. Essential for the assembly of the photosystem I (PSI) complex. May act as a chaperone-like factor to guide the assembly of the PSI subunits. This is Photosystem I assembly protein Ycf3 from Triticum aestivum (Wheat).